Here is a 234-residue protein sequence, read N- to C-terminus: tRNA (guanine-N(1)-)-methyltransferase (234 aa).

Residues glycine 110 and 134–139 (IGDYVL) contribute to the S-adenosyl-L-methionine site.

It belongs to the RNA methyltransferase TrmD family. In terms of assembly, homodimer.

The protein resides in the cytoplasm. The catalysed reaction is guanosine(37) in tRNA + S-adenosyl-L-methionine = N(1)-methylguanosine(37) in tRNA + S-adenosyl-L-homocysteine + H(+). Specifically methylates guanosine-37 in various tRNAs. This Tropheryma whipplei (strain TW08/27) (Whipple's bacillus) protein is tRNA (guanine-N(1)-)-methyltransferase.